The primary structure comprises 852 residues: Patatin-like phospholipase domain-containing protein CaO19.1504 (852 aa).

Low complexity predominate over residues 41–52 (ATTDITTTPIND). A disordered region spans residues 41–184 (ATTDITTTPI…KKTTPTSSTS (144 aa)). Over residues 75–95 (INGTVSDSSSITDEDIMNSSY) the composition is skewed to polar residues. A compositionally biased stretch (low complexity) spans 101–110 (SSTNLKSNST). Residues 113 to 122 (DDDDDDDDDD) are compositionally biased toward acidic residues. 2 stretches are compositionally biased toward low complexity: residues 129–142 (SGTT…SLSS) and 158–171 (GGSR…KGSS). The helical transmembrane segment at 207–227 (WPILIFVFSWIGILGIFYFMI) threads the bilayer. One can recognise a PNPLA domain in the interval 396 to 588 (LCLSGGACFA…RTDIPIEALN (193 aa)). The GXSXG motif lies at 427–431 (GTSGG). Ser-429 (nucleophile) is an active-site residue. The active-site Proton acceptor is the Asp-575. The tract at residues 800–840 (KKLLDELDNEDEEEDEEEEEVDVDDDDDDDDDSLSDSFEIT) is disordered. The segment covering 805-833 (ELDNEDEEEDEEEEEVDVDDDDDDDDDSL) has biased composition (acidic residues).

It belongs to the PLPL family.

The protein localises to the membrane. Its function is as follows. Probable lipid hydrolase. This Candida albicans (strain SC5314 / ATCC MYA-2876) (Yeast) protein is Patatin-like phospholipase domain-containing protein CaO19.1504.